The following is a 111-amino-acid chain: Entry-fusion complex protein OPG086 (111 aa).

The chain crosses the membrane as a helical; Signal-anchor span at residues 1–21 (MASLLYFILFLLFVCISYYFT). Residues 22 to 111 (YYPTNKLQAA…TLLPILLLSK (90 aa)) are Virion surface-facing.

Belongs to the orthopoxvirus OPG086 family. Interacts with OPG099/L5. Component of the entry fusion complex (EFC) composed of OPG053, OPG076, OPG086, OPG094, OPG095, OPG099, OPG107, OPG143, OPG104, OPG147 and OPG155. Except for OPG095 and OPG053, each of the EFC proteins is required for assembly or stability of the complex. Unglycosylated because produced in viral factories instead of the classic ER -Golgi route.

It localises to the virion membrane. Functionally, component of the entry fusion complex (EFC), which consists of 11 proteins. During cell infection, this complex mediates entry of the virion core into the host cytoplasm by a two-step mechanism consisting of lipid mixing of the viral and cellular membranes and subsequent pore formation. This chain is Entry-fusion complex protein OPG086 (OPG086), found in Variola virus (isolate Human/India/Ind3/1967) (VARV).